The primary structure comprises 429 residues: Adenylosuccinate synthetase (429 aa).

GTP is bound by residues 12–18 (GDEGKGK) and 40–42 (GHT). Residue Asp13 is the Proton acceptor of the active site. The Mg(2+) site is built by Asp13 and Gly40. IMP contacts are provided by residues 13–16 (DEGK), 38–41 (NAGH), Thr128, Arg142, Gln223, Thr238, and Arg302. Residue His41 is the Proton donor of the active site. 298–304 (VNTGRKR) is a binding site for substrate. GTP is bound by residues Arg304, 330–332 (KLD), and 412–414 (GVG).

This sequence belongs to the adenylosuccinate synthetase family. Homodimer. The cofactor is Mg(2+).

The protein localises to the cytoplasm. The enzyme catalyses IMP + L-aspartate + GTP = N(6)-(1,2-dicarboxyethyl)-AMP + GDP + phosphate + 2 H(+). It functions in the pathway purine metabolism; AMP biosynthesis via de novo pathway; AMP from IMP: step 1/2. Plays an important role in the de novo pathway of purine nucleotide biosynthesis. Catalyzes the first committed step in the biosynthesis of AMP from IMP. This is Adenylosuccinate synthetase from Corynebacterium glutamicum (strain R).